The sequence spans 1722 residues: Signal-induced proliferation-associated 1-like protein 2 (1722 aa).

2 disordered regions span residues 1–29 (MSDP…RTMQ) and 44–72 (SMGP…TPAV). Residues 57–66 (EGGGGGGGPA) show a composition bias toward gly residues. Phosphoserine occurs at positions 149, 380, and 384. The disordered stretch occupies residues 362–405 (ASAASQTPVPVGPAGGCESPLGSKEDLNSKENPDADEGDGKSND). The segment covering 384–403 (SKEDLNSKENPDADEGDGKS) has biased composition (basic and acidic residues). The region spanning 596 to 813 (LLKLDEQGLS…RTRQEYLKDL (218 aa)) is the Rap-GAP domain. Positions 951-1027 (EMTLRRNGLG…VKVVIIQPHE (77 aa)) constitute a PDZ domain. Serine 1030 carries the post-translational modification Phosphoserine. Disordered regions lie at residues 1068 to 1246 (HRVP…FGSG) and 1331 to 1360 (GSMG…SKST). Low complexity-rich tracts occupy residues 1091-1103 (LQCQ…AQAA) and 1120-1131 (SSPSNQSSSSDP). Positions 1195 to 1218 (YKERVLQKDGSCKESPNKLSHIGD) are enriched in basic and acidic residues. Residues 1220–1237 (SCSSHSSSNTLSSNTSSN) show a composition bias toward low complexity. Residue serine 1245 is modified to Phosphoserine. The span at 1331-1355 (GSMGDLSEVSSHSSGSQHSGSPSAH) shows a compositional bias: low complexity. Phosphoserine is present on residues serine 1461, serine 1472, serine 1478, serine 1488, serine 1549, serine 1552, and serine 1591. Positions 1652–1712 (STLTGKVNQL…ATAQLRKFTE (61 aa)) form a coiled coil.

The chain is Signal-induced proliferation-associated 1-like protein 2 (Sipa1l2) from Mus musculus (Mouse).